A 505-amino-acid chain; its full sequence is MFS-type transporter oryN (505 aa).

The segment at 1–54 (MAVAELPNIVSTDSSPSPHPGSRLSSEPTDIESQKAPSNAEPKTDPNLVTWDGP) is disordered. Helical transmembrane passes span 69-89 (AFVT…SSIF), 106-126 (VVTL…PVWG), 135-155 (KWPM…VAVA), 166-186 (FLTG…LVDM), 193-213 (GVAM…APLM), 226-246 (FTQW…VFGL), 280-300 (GIKD…VTEP), 301-321 (ILLL…LVFV), 337-357 (ISAL…AIVV), 376-396 (LPLM…FAWT), 401-421 (IHWA…YMVF), 440-460 (IGAN…FGPF), and 468-488 (AWAS…PVLF).

The protein belongs to the major facilitator superfamily. CAR1 family.

The protein localises to the membrane. MFS-type transporter; part of the gene cluster that mediates the biosynthesis of oryzines, natural products with an unusual maleidride backbone. The chain is MFS-type transporter oryN from Aspergillus oryzae (strain ATCC 42149 / RIB 40) (Yellow koji mold).